A 715-amino-acid polypeptide reads, in one-letter code: Palmitoyltransferase ZDHHC5 (715 aa).

Residues 1–13 are Cytoplasmic-facing; that stretch reads MPAESGKRFKPSK. The helical transmembrane segment at 14–34 threads the bilayer; sequence YVPVSAAAIFLVGATTLFFAF. Topologically, residues 35-52 are extracellular; that stretch reads TCPGLSLNVSPAVPIYNA. Residues 53 to 73 form a helical membrane-spanning segment; sequence IMFLFVLANFSMATFMDPGIF. Topologically, residues 74-148 are cytoplasmic; sequence PRAEEDEDKE…NCIGRRNYRY (75 aa). The residue at position 91 (tyrosine 91) is a Phosphotyrosine. One can recognise a DHHC domain in the interval 104-154; sequence KWCATCRFYRPPRCSHCSVCDNCVEEFDHHCPWVNNCIGRRNYRYFFLFLL. The S-palmitoyl cysteine intermediate role is filled by cysteine 134. A helical membrane pass occupies residues 149-169; the sequence is FFLFLLSLTAHIMGVFGFGLL. Over 170-191 the chain is Extracellular; it reads YVLYHIEELSGVRTAVTMAVMC. A helical transmembrane segment spans residues 192–212; the sequence is VAGLFFIPVAGLTGFHVVLVA. Residues 213-715 lie on the Cytoplasmic side of the membrane; sequence RGRTTNEQVT…VGGTTYEISV (503 aa). Serine 247 carries the post-translational modification Phosphoserine. The disordered stretch occupies residues 289-715; it reads GELRRTKSKG…VGGTTYEISV (427 aa). The residue at position 294 (threonine 294) is a Phosphothreonine. 2 positions are modified to phosphoserine: serine 296 and serine 299. Residue threonine 303 is modified to Phosphothreonine. Serine 345 carries the phosphoserine modification. A phosphothreonine mark is found at threonine 348 and threonine 350. Residues 359–373 show a composition bias toward low complexity; it reads SSSSTSAAMPHSSSA. Phosphoserine is present on residues serine 380, serine 398, serine 406, and serine 409. Position 411 is a phosphothreonine (threonine 411). Residues serine 415, serine 425, serine 429, and serine 432 each carry the phosphoserine modification. A compositionally biased stretch (low complexity) spans 422 to 432; sequence SSGSRSSSLKS. A Phosphothreonine modification is found at threonine 436. The span at 442 to 478 shows a compositional bias: polar residues; sequence QLQSIRSEGTTSTSYKSLANQTRNGSLSYDSLLTPSD. A phosphoserine mark is found at serine 529 and serine 554. The span at 581-597 shows a compositional bias: low complexity; the sequence is PRTSSSSDDSKRSPLSK. Residue arginine 617 is modified to Omega-N-methylarginine. The residue at position 621 (serine 621) is a Phosphoserine. Threonine 659 bears the Phosphothreonine mark. Residues 666–677 are compositionally biased toward polar residues; it reads LKTTYSKSNGQP. 2 positions are modified to phosphoserine: serine 684 and serine 694. At arginine 697 the chain carries Omega-N-methylarginine.

It belongs to the DHHC palmitoyltransferase family. ERF2/ZDHHC9 subfamily. Phosphorylation regulates association with endocytic proteins and its subcellular localization. Phosphorylation by LYN during fatty acid uptake leads to inactivation of the activity. In terms of processing, autopalmitoylated. Palmitoylation of the C-terminal tail regulates stimulation-dependent plasma membrane motility. In terms of tissue distribution, highly enriched in brain, detectable in liver and heart, and undetectable in most other tissues.

The protein resides in the cell membrane. It catalyses the reaction L-cysteinyl-[protein] + hexadecanoyl-CoA = S-hexadecanoyl-L-cysteinyl-[protein] + CoA. Palmitoyltransferase that catalyzes the addition of palmitate onto various protein substrates such as CTNND2, CD36, GSDMD, NLRP3, NOD1, NOD2, STAT3 and S1PR1 thus plays a role in various biological processes including cell adhesion, inflammation, fatty acid uptake, bacterial sensing or cardiac functions. Plays an important role in the regulation of synapse efficacy by mediating palmitoylation of delta-catenin/CTNND2, thereby increasing synaptic delivery and surface stabilization of alpha-amino-3-hydroxy-5-methyl-4-isoxazole propionic acid receptors (AMPARs). Under basal conditions, remains at the synaptic membrane through FYN-mediated phosphorylation that prevents association with endocytic proteins. Neuronal activity enhances the internalization and trafficking of DHHC5 from spines to dendritic shafts where it palmitoylates delta-catenin/CTNND2. Regulates cell adhesion at the plasma membrane by palmitoylating GOLGA7B and DSG2. Plays a role in innate immune response by mediating the palmitoylation of NOD1 and NOD2 and their proper recruitment to the bacterial entry site and phagosomes. Also participates in fatty acid uptake by palmitoylating CD36 and thereby targeting it to the plasma membrane. Upon binding of fatty acids to CD36, gets phosphorylated by LYN leading to inactivation and subsequent CD36 caveolar endocytosis. Controls oligodendrocyte development by catalyzing STAT3 palmitoylation. Acts as a regulator of inflammatory response by mediating palmitoylation of NLRP3 and GSDMD. Palmitoylates NLRP3 to promote inflammasome assembly and activation. Activates pyroptosis by catalyzing palmitoylation of gasdermin-D (GSDMD), thereby promoting membrane translocation and pore formation of GSDMD. The protein is Palmitoyltransferase ZDHHC5 (Zdhhc5) of Mus musculus (Mouse).